A 331-amino-acid polypeptide reads, in one-letter code: Decarboxylase orsB (331 aa).

Zn(2+) is bound by residues histidine 11, histidine 157, and aspartate 284.

This sequence belongs to the metallo-dependent hydrolases superfamily. ACMSD family.

It functions in the pathway secondary metabolite biosynthesis. In terms of biological role, decarboxylase; part of the gene cluster that mediates the biosynthesis of orsellinic acid, as well as of the cathepsin K inhibitors F9775 A and F9775 B. The non-reducing polyketide synthase orsA produces orsellinic acid by condensing acetyl-CoA with 3 malonyl-CoA units. Further modifications by the decarboxylase orsB and the tyrosinase-like protein orsC lead to the production of F9775 A and F9775 B. The functions of orsD and orsE remain unclear since only orsB and orsC are required to convert orsellinic acid into F9775 A and F9775 B. The sequence is that of Decarboxylase orsB from Emericella nidulans (strain FGSC A4 / ATCC 38163 / CBS 112.46 / NRRL 194 / M139) (Aspergillus nidulans).